Here is a 224-residue protein sequence, read N- to C-terminus: 7-cyano-7-deazaguanine synthase (224 aa).

8 to 18 (VSGGADSATVL) is a binding site for ATP. Zn(2+) contacts are provided by Cys189, Cys199, Cys202, and Cys205.

This sequence belongs to the QueC family. The cofactor is Zn(2+).

The catalysed reaction is 7-carboxy-7-deazaguanine + NH4(+) + ATP = 7-cyano-7-deazaguanine + ADP + phosphate + H2O + H(+). It functions in the pathway purine metabolism; 7-cyano-7-deazaguanine biosynthesis. In terms of biological role, catalyzes the ATP-dependent conversion of 7-carboxy-7-deazaguanine (CDG) to 7-cyano-7-deazaguanine (preQ(0)). The protein is 7-cyano-7-deazaguanine synthase of Rickettsia felis (strain ATCC VR-1525 / URRWXCal2) (Rickettsia azadi).